The primary structure comprises 363 residues: Fructose-bisphosphate aldolase, muscle type (363 aa).

Positions 56 and 147 each coordinate substrate. K230 acts as the Schiff-base intermediate with dihydroxyacetone-P in catalysis.

Belongs to the class I fructose-bisphosphate aldolase family. Homotetramer. As to expression, expressed mainly in the skeletal muscle, heart muscle, brain, and some other tissues, but probably not in liver.

The catalysed reaction is beta-D-fructose 1,6-bisphosphate = D-glyceraldehyde 3-phosphate + dihydroxyacetone phosphate. The protein operates within carbohydrate degradation; glycolysis; D-glyceraldehyde 3-phosphate and glycerone phosphate from D-glucose: step 4/4. This Lethenteron camtschaticum (Japanese lamprey) protein is Fructose-bisphosphate aldolase, muscle type.